The primary structure comprises 406 residues: MSVLSGLASEPRTPLSSKARMKRLPRKSQNEKYRLKYLRLRRAAKATVFENASICDEIARLEEKFLKAKEERRYLLKKLLQIHALTEGEPQAAAPSHSSSLPLPYGVTSSVGTMQGAGPSTGAEEPFAKKSKKEKKEKGKENSKLEVLKKTSKKKKMEGGARKLVRPIALDPSGQPVFPIGLGGLTVYSLGEIITNRPGFHDENAIYPVGYCSTRVYASMKCPDQKCLYTCQIKDGGVQPQFEIVPEDDPQNTIVGSSADACYEELLRAISATTGKLMPNPLSCGADFFGFSHPTIHNLIQSCPEAQNCVNYQWVKFDACKPRKGQLSQELPENDATMSLEAFQTQTFDDDHDDSILPGSLDLPELQHEAFVSSYQPEFLTHEPLVDTDLQHLKSPSQCSPIQSSD.

2 disordered regions span residues 1–28 (MSVLSGLASEPRTPLSSKARMKRLPRKS) and 109–144 (SSVGTMQGAGPSTGAEEPFAKKSKKEKKEKGKENSK). Serine 2 is modified (N-acetylserine). Phosphothreonine is present on threonine 13. A compositionally biased stretch (basic and acidic residues) spans 134–144 (EKKEKGKENSK). The FYR N-terminal domain occupies 177–236 (VFPIGLGGLTVYSLGEIITNRPGFHDENAIYPVGYCSTRVYASMKCPDQKCLYTCQIKDG). The FYR C-terminal domain maps to 237–316 (GVQPQFEIVP…QNCVNYQWVK (80 aa)).

The protein belongs to the TBRG1 family. In terms of assembly, interacts with CDKN2A and MDM2. Post-translationally, ubiquitinated; mediated by MDM2 and leading to its subsequent proteasomal degradation.

It is found in the nucleus. Functionally, acts as a growth inhibitor. Can activate p53/TP53, causes G1 arrest and collaborates with CDKN2A to restrict proliferation, but does not require either protein to inhibit DNA synthesis. Redistributes CDKN2A into the nucleoplasm. Involved in maintaining chromosomal stability. The protein is Transforming growth factor beta regulator 1 (Tbrg1) of Mus musculus (Mouse).